The primary structure comprises 618 residues: Glucose starvation modulator protein 1 (618 aa).

Positions 20–48 (CEFCHTKHIQCDVGRPCQNCLKRNIGKFC) form a DNA-binding region, zn(2)-C6 fungal-type. The interval 325–352 (ANANTHPSHNAKLESECDSSSHSDADLE) is disordered. Basic and acidic residues predominate over residues 335 to 352 (AKLESECDSSSHSDADLE). Residues 466-538 (LLDLENMAKL…QIFNELLAFG (73 aa)) enclose the PAS domain.

This sequence belongs to the ERT1/acuK family.

Its subcellular location is the nucleus. In terms of biological role, transcription factor which regulates nonfermentable carbon utilization. Binds specifically to 5'-CGGN(8)CGG-3' and 5'-CGGN(9)CGG-3' sequences in the promoter region. The protein is Glucose starvation modulator protein 1 (GSM1) of Saccharomyces cerevisiae (strain ATCC 204508 / S288c) (Baker's yeast).